Consider the following 175-residue polypeptide: MMYMVFLLSVAFVISFIGFSSKPSPIYGGLGLIVGGGVGCGIVMGLGGSFLGLMVFLVYLGGMLVVFGYTTAMATEEYPEAWGSNVVILSALFVGLLVEVAMIVWMIVDGEVGLISCGLKDMEDWVVLGGYGMDVVREDYAGGSALYTYGDWLVILAGWSLFVSIFIVIEITRGR.

Transmembrane regions (helical) follow at residues 1–21, 26–46, 47–67, 87–107, and 152–172; these read MMYMVFLLSVAFVISFIGFSS, IYGGLGLIVGGGVGCGIVMGL, GGSFLGLMVFLVYLGGMLVVF, VILSALFVGLLVEVAMIVWMI, and WLVILAGWSLFVSIFIVIEIT.

Belongs to the complex I subunit 6 family.

It is found in the mitochondrion membrane. It catalyses the reaction a ubiquinone + NADH + 5 H(+)(in) = a ubiquinol + NAD(+) + 4 H(+)(out). Functionally, core subunit of the mitochondrial membrane respiratory chain NADH dehydrogenase (Complex I) that is believed to belong to the minimal assembly required for catalysis. Complex I functions in the transfer of electrons from NADH to the respiratory chain. The immediate electron acceptor for the enzyme is believed to be ubiquinone. The chain is NADH-ubiquinone oxidoreductase chain 6 (MT-ND6) from Dasypus novemcinctus (Nine-banded armadillo).